A 420-amino-acid polypeptide reads, in one-letter code: uncharacterized protein (420 aa).

Belongs to the Rv1128c/1148c/1588c/1702c/1945/3466 family.

This is an uncharacterized protein from Mycobacterium tuberculosis (strain CDC 1551 / Oshkosh).